Reading from the N-terminus, the 509-residue chain is MQSWSRVYRSLAKKGHFNRISHGLQGVSSVPLRTYADQPIEADVTVIGSGPGGYVAAIKSAQLGFKTVCIEKNETLGGTCLNVGCIPSKALLNNSHYYHMAHGKDFASRGIEIPEVRLNLEKMMEQKHSAVKALTGGIAHLFKQNKVVHVNGFGKITGKNQVTATKADGSTQVIDTKNILVATGSEVTPFPGITIDEDTIVSSTGALSLKKVPEKLVVIGAGVIGVELGSVWQRLGADVTAVEFLGHVGGIGIDMEISKNFQRILQRQGFKFKLNTKVTGATKKSDGKIDVSVEAASGGKAEVITCDVLLVCIGRRPFTQNLGLEELGIELDPKGRIPVNNRFQTKIPNIYAIGDVVAGPMLAHKAEDEGIICVEGMAGGAVHIDYNCVPSVIYTHPEVAWVGKSEEQLKEEGIEFKIGKFPFAANSRAKTNADTDGMVKILGHKSTDRVLGAHILGPGAGEMVNEAALALEYGASCEDIARVCHAHPTLSEAFREANLAAAFGKPINF.

The N-terminal 35 residues, 1 to 35, are a transit peptide targeting the mitochondrion; the sequence is MQSWSRVYRSLAKKGHFNRISHGLQGVSSVPLRTY. K66 bears the N6-acetyllysine; alternate mark. An N6-succinyllysine; alternate modification is found at K66. Residues 71–80 and K89 contribute to the FAD site; that span reads EKNETLGGTC. C80 and C85 form a disulfide bridge. K104, K122, K132, and K143 each carry N6-acetyllysine; alternate. K104, K122, K132, and K143 each carry N6-succinyllysine; alternate. G154 serves as a coordination point for FAD. K159 and K166 each carry N6-succinyllysine. FAD is bound at residue 183 to 185; the sequence is TGS. NAD(+) contacts are provided by residues 220-227 and E243; that span reads GAGVIGVE. N6-succinyllysine occurs at positions 273 and 277. V278 lines the NAD(+) pocket. 2 positions are modified to phosphoserine: S285 and S297. G314 is a binding site for NAD(+). At K334 the chain carries N6-acetyllysine; alternate. An N6-succinyllysine; alternate modification is found at K334. K346 carries the N6-acetyllysine modification. FAD-binding positions include D355 and 361–364; that span reads MLAH. K410 carries the post-translational modification N6-acetyllysine; alternate. An N6-succinyllysine; alternate modification is found at K410. N6-acetyllysine is present on residues K417 and K420. K430 carries the N6-succinyllysine modification. H487 (proton acceptor) is an active-site residue. K505 is modified (N6-acetyllysine; alternate). K505 carries the post-translational modification N6-succinyllysine; alternate.

The protein belongs to the class-I pyridine nucleotide-disulfide oxidoreductase family. As to quaternary structure, homodimer. Part of the multimeric pyruvate dehydrogenase complex that contains multiple copies of pyruvate dehydrogenase (subunits PDHA (PDHA1 or PDHA2) and PDHB, E1), dihydrolipoamide acetyltransferase (DLAT, E2) and lipoamide dehydrogenase (DLD, E3). These subunits are bound to an inner core composed of about 48 DLAT and 12 PDHX molecules (by non covalent bonds). The 2-oxoglutarate dehydrogenase complex is composed of OGDH (2-oxoglutarate dehydrogenase; E1), DLST (dihydrolipoamide succinyltransferase; E2), DLD (dihydrolipoamide dehydrogenase; E3) and the assembly factor KGD4. It contains multiple copies of the three enzymatic components (E1, E2 and E3). In the nucleus, the 2-oxoglutarate dehydrogenase complex associates with KAT2A. Interacts with PDHX. Requires FAD as cofactor. Tyrosine phosphorylated. In terms of tissue distribution, expressed in liver (at protein level).

The protein localises to the mitochondrion matrix. It is found in the nucleus. The protein resides in the cell projection. Its subcellular location is the cilium. It localises to the flagellum. The protein localises to the cytoplasmic vesicle. It is found in the secretory vesicle. The protein resides in the acrosome. The catalysed reaction is N(6)-[(R)-dihydrolipoyl]-L-lysyl-[protein] + NAD(+) = N(6)-[(R)-lipoyl]-L-lysyl-[protein] + NADH + H(+). In terms of biological role, lipoamide dehydrogenase is a component of the glycine cleavage system as well as an E3 component of three alpha-ketoacid dehydrogenase complexes (pyruvate-, alpha-ketoglutarate-, and branched-chain amino acid-dehydrogenase complex). The 2-oxoglutarate dehydrogenase complex is mainly active in the mitochondrion. A fraction of the 2-oxoglutarate dehydrogenase complex also localizes in the nucleus and is required for lysine succinylation of histones: associates with KAT2A on chromatin and provides succinyl-CoA to histone succinyltransferase KAT2A. In monomeric form may have additional moonlighting function as serine protease. Involved in the hyperactivation of spermatazoa during capacitation and in the spermatazoal acrosome reaction. The sequence is that of Dihydrolipoyl dehydrogenase, mitochondrial (Dld) from Mus musculus (Mouse).